The following is a 290-amino-acid chain: Sodium/potassium-transporting ATPase subunit beta-2 (290 aa).

At 1–39 (MVIQKEKKSCGQVVEEWKEFVWNPRTHQFMGRTGTSWAF) the chain is on the cytoplasmic side. Residues 40–67 (ILLFYLVFYGFLTAMFTLTMWVMLQTVS) form a helical; Signal-anchor for type II membrane protein membrane-spanning segment. At 68–290 (DHTPKYQDRL…VAFKLRINKT (223 aa)) the chain is on the extracellular side. N-linked (GlcNAc...) asparagine glycans are attached at residues asparagine 96 and asparagine 118. A disulfide bridge links cysteine 129 with cysteine 150. N-linked (GlcNAc...) asparagine glycosylation is found at asparagine 153 and asparagine 159. Cysteines 160 and 177 form a disulfide. N-linked (GlcNAc...) asparagine glycans are attached at residues asparagine 193, asparagine 197, and asparagine 238. The tract at residues 193–290 (NQSMNVTCAG…VAFKLRINKT (98 aa)) is immunoglobulin-like. An intrachain disulfide couples cysteine 200 to cysteine 261.

The protein belongs to the X(+)/potassium ATPases subunit beta family. The sodium/potassium-transporting ATPase is composed of a catalytic alpha subunit, an auxiliary non-catalytic beta subunit and an additional regulatory subunit. Interacts with isoform 2 of BSG.

It is found in the cell membrane. Functionally, this is the non-catalytic component of the active enzyme, which catalyzes the hydrolysis of ATP coupled with the exchange of Na(+) and K(+) ions across the plasma membrane. The exact function of the beta-2 subunit is not known. Its function is as follows. Mediates cell adhesion of neurons and astrocytes, and promotes neurite outgrowth. This chain is Sodium/potassium-transporting ATPase subunit beta-2 (ATP1B2), found in Homo sapiens (Human).